A 144-amino-acid chain; its full sequence is Large ribosomal subunit protein uL11 (144 aa).

Belongs to the universal ribosomal protein uL11 family. As to quaternary structure, part of the ribosomal stalk of the 50S ribosomal subunit. Interacts with L10 and the large rRNA to form the base of the stalk. L10 forms an elongated spine to which L12 dimers bind in a sequential fashion forming a multimeric L10(L12)X complex. One or more lysine residues are methylated.

Its function is as follows. Forms part of the ribosomal stalk which helps the ribosome interact with GTP-bound translation factors. The protein is Large ribosomal subunit protein uL11 of Deinococcus deserti (strain DSM 17065 / CIP 109153 / LMG 22923 / VCD115).